The primary structure comprises 717 residues: Mitochondrial potassium channel ATP-binding subunit (717 aa).

The N-terminal 25 residues, 1–25 (MLVHLFRFGIRGGPVPGWSLQSLRF), are a transit peptide targeting the mitochondrion. 4 consecutive transmembrane segments (helical) span residues 127-147 (LLAL…NVQI), 178-198 (VQLL…LVLL), 278-298 (LMLA…GSGL), and 365-385 (NIAF…LVAG). One can recognise an ABC transmembrane type-1 domain in the interval 132-419 (AAIVLALGAA…LSVLFGQVVR (288 aa)). An ABC transporter domain is found at 454-691 (ITFQNVTFSY…GGLYSELIRR (238 aa)). 489 to 496 (GQSGGGKT) provides a ligand contact to ATP. Residues 695–717 (DASLTSTPPAEKPEDPKSCQSKA) form a disordered region.

This sequence belongs to the ABC transporter superfamily. ABCB family. Multidrug resistance exporter (TC 3.A.1.201) subfamily. In terms of assembly, the mitochondrial potassium channel (mitoK(ATP)) is composed of 4 subunits of CCDC51/MITOK and 4 subunits of ABCB8/MITOSUR. Interacts with PAAT. Interacts with NRP1; NRP1 regulates ABCB8/MITOSUR protein levels in mitochondria.

The protein resides in the mitochondrion inner membrane. Channel activity inhibited by ATP via ABCB8/MITOSUR subunit. Functionally, ATP-binding subunit of the mitochondrial ATP-gated potassium channel (mitoK(ATP)). Together with pore-forming subunit CCDC51/MITOK of the mitoK(ATP) channel, mediates ATP-dependent potassium currents across the mitochondrial inner membrane. An increase in ATP intracellular levels closes the channel, inhibiting K(+) transport, whereas a decrease in ATP levels enhances K(+) uptake in the mitochondrial matrix. Plays a role in mitochondrial iron transport. Required for maintenance of normal cardiac function, possibly by influencing mitochondrial iron export and regulating the maturation of cytosolic iron sulfur cluster-containing enzymes. The sequence is that of Mitochondrial potassium channel ATP-binding subunit from Mus musculus (Mouse).